We begin with the raw amino-acid sequence, 398 residues long: Phosphopentomutase (398 aa).

Mn(2+) contacts are provided by Asp-13, Asp-290, His-295, Asp-331, His-332, and His-343.

Belongs to the phosphopentomutase family. Requires Mn(2+) as cofactor.

Its subcellular location is the cytoplasm. It catalyses the reaction 2-deoxy-alpha-D-ribose 1-phosphate = 2-deoxy-D-ribose 5-phosphate. The catalysed reaction is alpha-D-ribose 1-phosphate = D-ribose 5-phosphate. Its pathway is carbohydrate degradation; 2-deoxy-D-ribose 1-phosphate degradation; D-glyceraldehyde 3-phosphate and acetaldehyde from 2-deoxy-alpha-D-ribose 1-phosphate: step 1/2. Its function is as follows. Isomerase that catalyzes the conversion of deoxy-ribose 1-phosphate (dRib-1-P) and ribose 1-phosphate (Rib-1-P) to deoxy-ribose 5-phosphate (dRib-5-P) and ribose 5-phosphate (Rib-5-P), respectively. The chain is Phosphopentomutase from Clostridium tetani (strain Massachusetts / E88).